Consider the following 637-residue polypeptide: 1-deoxy-D-xylulose-5-phosphate synthase (637 aa).

Thiamine diphosphate is bound by residues histidine 76 and 117-119 (GHS). Aspartate 148 serves as a coordination point for Mg(2+). Thiamine diphosphate is bound by residues 149 to 150 (GA), asparagine 177, tyrosine 294, and glutamate 381. Residue asparagine 177 participates in Mg(2+) binding.

Belongs to the transketolase family. DXPS subfamily. In terms of assembly, homodimer. Mg(2+) is required as a cofactor. Requires thiamine diphosphate as cofactor.

It carries out the reaction D-glyceraldehyde 3-phosphate + pyruvate + H(+) = 1-deoxy-D-xylulose 5-phosphate + CO2. The protein operates within metabolic intermediate biosynthesis; 1-deoxy-D-xylulose 5-phosphate biosynthesis; 1-deoxy-D-xylulose 5-phosphate from D-glyceraldehyde 3-phosphate and pyruvate: step 1/1. In terms of biological role, catalyzes the acyloin condensation reaction between C atoms 2 and 3 of pyruvate and glyceraldehyde 3-phosphate to yield 1-deoxy-D-xylulose-5-phosphate (DXP). The polypeptide is 1-deoxy-D-xylulose-5-phosphate synthase (Neisseria meningitidis serogroup B (strain ATCC BAA-335 / MC58)).